We begin with the raw amino-acid sequence, 359 residues long: Alanine racemase, biosynthetic (359 aa).

The Proton acceptor; specific for D-alanine role is filled by Lys34. Lys34 bears the N6-(pyridoxal phosphate)lysine mark. Residue Arg129 participates in substrate binding. Residue Tyr255 is the Proton acceptor; specific for L-alanine of the active site. Met303 is a substrate binding site.

The protein belongs to the alanine racemase family. Monomer but homodimer in the presence of the substrate. Requires pyridoxal 5'-phosphate as cofactor.

The enzyme catalyses L-alanine = D-alanine. It functions in the pathway amino-acid biosynthesis; D-alanine biosynthesis; D-alanine from L-alanine: step 1/1. The protein operates within cell wall biogenesis; peptidoglycan biosynthesis. Catalyzes the interconversion of L-alanine and D-alanine. This chain is Alanine racemase, biosynthetic (alr), found in Shigella sonnei.